Here is a 344-residue protein sequence, read N- to C-terminus: Rho guanine nucleotide exchange factor 39 (344 aa).

Residues 22–197 (KRVCTARELL…SETAQKVHAI (176 aa)) form the DH domain. Positions 227-331 (WFLRQGWLLV…WHHSLTLAIR (105 aa)) constitute a PH domain.

Its subcellular location is the cell membrane. Functionally, promotes cell proliferation. In Mus musculus (Mouse), this protein is Rho guanine nucleotide exchange factor 39 (Arhgef39).